A 481-amino-acid chain; its full sequence is Leukocyte immunoglobulin-like receptor subfamily A member 6 (481 aa).

The N-terminal stretch at 1 to 23 (MTPALTALLCLGLSLGPRTHVQA) is a signal peptide. Residues 24-118 (GPLPKPTLWA…PSDPLELVVT (95 aa)) form the Ig-like C2-type 1 domain. Topologically, residues 24–447 (GPLPKPTLWA…SHAKDYTVEN (424 aa)) are extracellular. A disulfide bridge links Cys-49 with Cys-98. Residue Asn-139 is glycosylated (N-linked (GlcNAc...) asparagine). 2 disulfides stabilise this stretch: Cys-144–Cys-196 and Cys-245–Cys-296. Ig-like C2-type domains lie at 225–314 (PSLL…DPLN) and 323–408 (DRVS…HLLS). 2 N-linked (GlcNAc...) asparagine glycosylation sites follow: Asn-301 and Asn-340. Cysteines 345 and 396 form a disulfide. The disordered stretch occupies residues 418–439 (VSGPSGGPSLPPTGPPSTPASH). The span at 426–435 (SLPPTGPPST) shows a compositional bias: pro residues. The helical transmembrane segment at 448–468 (LIRMGMAGLVLVVLGILLFEA) threads the bilayer. The Cytoplasmic segment spans residues 469–481 (QHSQRSPQDAARR).

It is found in the membrane. In terms of biological role, may act as receptor for class I MHC antigens. This is Leukocyte immunoglobulin-like receptor subfamily A member 6 (LILRA6) from Pan troglodytes (Chimpanzee).